The sequence spans 290 residues: Cilia- and flagella-associated protein 298 (290 aa).

This sequence belongs to the CFAP298 family. As to quaternary structure, interacts with ZMYND10.

It localises to the cytoplasm. Its subcellular location is the cytoskeleton. The protein localises to the cilium basal body. Functionally, plays a role in motile cilium function, possibly by acting on outer dynein arm assembly. Seems to be important for initiation rather than maintenance of cilium motility. Required for correct positioning of cilia at the apical cell surface, suggesting an additional role in the planar cell polarity (PCP) pathway. May suppress canonical Wnt signaling activity. The sequence is that of Cilia- and flagella-associated protein 298 from Mus musculus (Mouse).